Consider the following 292-residue polypeptide: ATP synthase gamma chain (292 aa).

The protein belongs to the ATPase gamma chain family. As to quaternary structure, F-type ATPases have 2 components, CF(1) - the catalytic core - and CF(0) - the membrane proton channel. CF(1) has five subunits: alpha(3), beta(3), gamma(1), delta(1), epsilon(1). CF(0) has three main subunits: a, b and c.

It localises to the cell inner membrane. Functionally, produces ATP from ADP in the presence of a proton gradient across the membrane. The gamma chain is believed to be important in regulating ATPase activity and the flow of protons through the CF(0) complex. In Nautilia profundicola (strain ATCC BAA-1463 / DSM 18972 / AmH), this protein is ATP synthase gamma chain.